The chain runs to 1982 residues: CASP8-associated protein 2 (1982 aa).

A2 is subject to N-acetylalanine. The residue at position 20 (S20) is a Phosphoserine. Over residues 159 to 191 (VKTKDLKSRSPHLDDCSKTDHRAKSDVSKDVHH) the composition is skewed to basic and acidic residues. The segment at 159–552 (VKTKDLKSRS…ESGPNETKNK (394 aa)) is disordered. The residue at position 194 (S194) is a Phosphoserine. Residues 198–210 (LEKEGKPHSDKRS) are compositionally biased toward basic and acidic residues. The span at 225-240 (GVWSRSHYQVGEGSSN) shows a compositional bias: polar residues. The span at 286-395 (GHPEKYGKGE…ERASLPHSKN (110 aa)) shows a compositional bias: basic and acidic residues. Positions 396–405 (EITFSHNSSK) are enriched in polar residues. 3 stretches are compositionally biased toward basic and acidic residues: residues 406–423 (YHLEERRGWEDCKRDKSV), 444–455 (KNIDSKEVDAMH), and 463–524 (KAER…KGEV). The residue at position 567 (S567) is a Phosphoserine. A disordered region spans residues 569–593 (AKKQPVSQDNQHKITDIPKSSGVCD). 3 positions are modified to phosphoserine: S658, S815, and S875. Disordered regions lie at residues 875-1017 (SPPQ…DKVM), 1157-1188 (FGRDSDEGKLEKTSKQNAQYSNSQKRSVDNSN), and 1251-1283 (ERSLEVHCPSTPKSEKNEGSSIEDAQTSQHATL). The segment covering 894-904 (SAHSTSKSQSD) has biased composition (polar residues). Basic and acidic residues-rich tracts occupy residues 905 to 924 (LNKENQKPIYKSDKCTEADT), 936 to 965 (GEIRSDSETSKPQESFEKNSKRRVSADVRK), 999 to 1016 (KRPDKSSRSSKTEKKDKV), and 1157 to 1170 (FGRDSDEGKLEKTS). Position 940 is a phosphoserine (S940). Residue S1161 is modified to Phosphoserine. Polar residues-rich tracts occupy residues 1171–1181 (KQNAQYSNSQK) and 1269–1281 (GSSIEDAQTSQHA). The residue at position 1343 (K1343) is an N6-acetyllysine. An SUMO interaction motif 1 (SIM); mediates the binding to polysumoylated substrates motif is present at residues 1683–1687 (YVDLT). Positions 1709-1982 (DQLGCSGGNL…MKLFEKSKCR (274 aa)) are NCOA2-binding. Residues 1737–1741 (FIDLT) carry the SUMO interaction motif 2 (SIM); mediates the binding to polysumoylated substrates motif. Residues 1794–1798 (YIDLT) carry the SUMO interaction motif 3 (SIM); mediates the binding to polysumoylated substrates motif. The disordered stretch occupies residues 1803 to 1909 (SSCEVKKDEL…IKDSSAALAT (107 aa)). Positions 1851 to 1865 (KETDLTNKEKTKKPT) are enriched in basic and acidic residues.

As to quaternary structure, self-associates. Component of the death-inducing signaling complex (DISC) with CASP8, FADD and FAS. Interacts with NCOA2 and NCOA3. Interacts with SRRT. Interacts with TRAF2. Interacts with NPAT. Interacts (via SIM domains) with SUMO1 and SUMO2. Interacts with SP100; may negatively regulate CASP8AP2 export from the nucleus to the cytoplasm.

Its subcellular location is the cytoplasm. The protein localises to the nucleus. It localises to the PML body. It is found in the mitochondrion. Participates in TNF-alpha-induced blockade of glucocorticoid receptor (GR) transactivation at the nuclear receptor coactivator level, upstream and independently of NF-kappa-B. Suppresses both NCOA2- and NCOA3-induced enhancement of GR transactivation. Involved in TNF-alpha-induced activation of NF-kappa-B via a TRAF2-dependent pathway. Acts as a downstream mediator for CASP8-induced activation of NF-kappa-B. Required for the activation of CASP8 in FAS-mediated apoptosis. Required for histone gene transcription and progression through S phase. The polypeptide is CASP8-associated protein 2 (Homo sapiens (Human)).